Reading from the N-terminus, the 83-residue chain is Small ribosomal subunit protein bS18 (83 aa).

It belongs to the bacterial ribosomal protein bS18 family. Part of the 30S ribosomal subunit. Forms a tight heterodimer with protein bS6.

Functionally, binds as a heterodimer with protein bS6 to the central domain of the 16S rRNA, where it helps stabilize the platform of the 30S subunit. The chain is Small ribosomal subunit protein bS18 from Tropheryma whipplei (strain TW08/27) (Whipple's bacillus).